Here is a 229-residue protein sequence, read N- to C-terminus: Ras-related protein Rab-33B (229 aa).

GTP is bound by residues asparagine 43, valine 44, glycine 45, lysine 46, threonine 47, cysteine 48, threonine 62, and threonine 65. Position 47 (threonine 47) interacts with Mg(2+). The Switch 1 motif lies at glycine 56 to valine 68. Positions 65 and 88 each coordinate Mg(2+). The short motif at threonine 89–histidine 108 is the Switch 2 element. Residues glycine 91, asparagine 148, lysine 149, aspartate 151, alanine 179, and lysine 180 each coordinate GTP. S-geranylgeranyl cysteine attachment occurs at residues cysteine 227 and cysteine 229. Cysteine 229 bears the Cysteine methyl ester mark.

This sequence belongs to the small GTPase superfamily. Rab family. In terms of assembly, interacts (GTP- and GDP-bound forms) with ATG16L1; the complex consists of a tetramer where two RAB33B molecules bind independently one molecule of the ATG16L1 homodimer; the interaction promotes ATG12-ATG5-ATG16L1 complex recruitment to phagophores. Interacts with ATG16L2; however interaction is approximately hundred times lower than for ATG16L1. Interacts with RIC1 (via C-terminus domain); the interaction is direct with a preference for RAB33B-GTP. Interacts with RGP1. Requires Mg(2+) as cofactor. Post-translationally, prenylated.

Its subcellular location is the golgi apparatus membrane. The protein localises to the golgi apparatus. The protein resides in the cis-Golgi network. It localises to the preautophagosomal structure membrane. It catalyses the reaction GTP + H2O = GDP + phosphate + H(+). Regulated by guanine nucleotide exchange factors (GEFs) which promote the exchange of bound GDP for free GTP. Regulated by GTPase activating proteins (GAPs) such as SGSM2 which increase the GTP hydrolysis activity. Inhibited by GDP dissociation inhibitors (GDIs). Its function is as follows. The small GTPases Rab are key regulators of intracellular membrane trafficking, from the formation of transport vesicles to their fusion with membranes. Rabs cycle between an inactive GDP-bound form and an active GTP-bound form that is able to recruit to membranes different sets of downstream effectors directly responsible for vesicle formation, movement, tethering and fusion. RAB33B acts, in coordination with RAB6A, to regulate intra-Golgi retrograde trafficking. Participates in autophagosome formation by recruiting the ATG12-ATG5-ATG16L1 complex to phagophores, probably in a nucleotide-independent manner. The polypeptide is Ras-related protein Rab-33B (RAB33B) (Pongo abelii (Sumatran orangutan)).